Here is a 560-residue protein sequence, read N- to C-terminus: DNA ligase B (560 aa).

The active-site N6-AMP-lysine intermediate is the Lys124.

This sequence belongs to the NAD-dependent DNA ligase family. LigB subfamily.

It carries out the reaction NAD(+) + (deoxyribonucleotide)n-3'-hydroxyl + 5'-phospho-(deoxyribonucleotide)m = (deoxyribonucleotide)n+m + AMP + beta-nicotinamide D-nucleotide.. Its function is as follows. Catalyzes the formation of phosphodiester linkages between 5'-phosphoryl and 3'-hydroxyl groups in double-stranded DNA using NAD as a coenzyme and as the energy source for the reaction. The polypeptide is DNA ligase B (Citrobacter koseri (strain ATCC BAA-895 / CDC 4225-83 / SGSC4696)).